The primary structure comprises 135 residues: ATP synthase epsilon chain (135 aa).

It belongs to the ATPase epsilon chain family. F-type ATPases have 2 components, CF(1) - the catalytic core - and CF(0) - the membrane proton channel. CF(1) has five subunits: alpha(3), beta(3), gamma(1), delta(1), epsilon(1). CF(0) has three main subunits: a, b and c.

The protein localises to the cell inner membrane. Produces ATP from ADP in the presence of a proton gradient across the membrane. This chain is ATP synthase epsilon chain, found in Rhizobium leguminosarum bv. trifolii (strain WSM2304).